Here is a 455-residue protein sequence, read N- to C-terminus: UDP-N-acetylmuramoylalanine--D-glutamate ligase (455 aa).

An ATP-binding site is contributed by 112-118 (GTNGKTT).

It belongs to the MurCDEF family.

Its subcellular location is the cytoplasm. It catalyses the reaction UDP-N-acetyl-alpha-D-muramoyl-L-alanine + D-glutamate + ATP = UDP-N-acetyl-alpha-D-muramoyl-L-alanyl-D-glutamate + ADP + phosphate + H(+). The protein operates within cell wall biogenesis; peptidoglycan biosynthesis. In terms of biological role, cell wall formation. Catalyzes the addition of glutamate to the nucleotide precursor UDP-N-acetylmuramoyl-L-alanine (UMA). This is UDP-N-acetylmuramoylalanine--D-glutamate ligase from Trichormus variabilis (strain ATCC 29413 / PCC 7937) (Anabaena variabilis).